A 357-amino-acid polypeptide reads, in one-letter code: Arginine kinase (357 aa).

One can recognise a Phosphagen kinase N-terminal domain in the interval 9–91 (KLEAGFKKLQ…FNPIIEDYHE (83 aa)). L-arginine is bound at residue 64 to 66 (GVG). The Phosphagen kinase C-terminal domain occupies 119-356 (YVVSTHVRCG…LEMIKMEEAA (238 aa)). Residues 122 to 126 (STHVR) and histidine 185 contribute to the ATP site. Glutamate 225 is a binding site for L-arginine. ATP is bound at residue arginine 229. Cysteine 271 is a binding site for L-arginine. ATP-binding positions include 280–284 (RASVH) and 309–314 (RGTRGE).

It belongs to the ATP:guanido phosphotransferase family.

It carries out the reaction L-arginine + ATP = N(omega)-phospho-L-arginine + ADP + H(+). Functionally, catalyzes the reversible transfer of high energy ATP gamma-phosphate group to L-arginine. This is Arginine kinase from Polybetes pythagoricus (South American huntsman spider).